A 3132-amino-acid chain; its full sequence is Toxin CdiA (3132 aa).

Residues 1–32 constitute a signal peptide (signal); the sequence is MHQPPVRFTYRLLSYLVSAIIAGQPLLPAVGA. The tract at residues 36 to 322 is two-partner system transport domain (TPS); the sequence is PQNGAGMDKA…AGGNLSVTGT (287 aa). Positions 351–1378 are FHA-1; sequence GELTAGQNAM…ITMNTAHLLN (1028 aa). A receptor-binding domain (RBD) region spans residues 1379-1635; the sequence is SWDAISASHE…LSLSGASVSS (257 aa). The YP domain stretch occupies residues 1636–1820; it reads YPLPSGNNGY…LSPEDITLHN (185 aa). Residues 1821–1859 form a periplasmic FHA-1 repeat (pFR) region; that stretch reads GSVISGNNVQLAGGNITNSGSSINAQNDLLLDRTGSIDN. An FHA-2 region spans residues 1930 to 2526; that stretch reads RATDSLFMGA…QDSDRYDSRQ (597 aa). Disordered regions lie at residues 2195 to 2228 and 2456 to 2497; these read TGTG…STIG and AGIN…SGAQ. Polar residues-rich tracts occupy residues 2217–2228 and 2483–2497; these read GTTQSQSASTIG and VSLT…SGAQ. A pre-toxin (PT) domain region spans residues 2862–2904; the sequence is DNLSEQERQQISMLATIASGIAGGLVGNSTSAAGTGAQAGRNS. A VENN CT cleavage motif motif is present at residues 2905 to 2908; sequence VENN. Positions 2909–3121 are C-terminal effector domain (CT); that stretch reads AMSGLEGFGT…IGTVTDYQIE (213 aa).

In the N-terminal section; belongs to the CdiA toxin family. As to quaternary structure, probably interacts with cognate immunity protein CdiI. Expressed as 303 kDa protein which can be processed to 284 kDa and 195 kDa forms.

It localises to the secreted. The protein resides in the target cell. It is found in the target cell cytoplasm. Toxic component of a toxin-immunity protein module, which functions as a cellular contact-dependent growth inhibition (CDI) system. CDI modules allow bacteria to communicate with and inhibit the growth of closely related neighboring bacteria (target cell counts decrease 1000- to 10(5)-fold) in a contact-dependent fashion. Inhibitory cells must be in logarithmic (not stationary) phase to inhibit growth of their targets, but protein synthesis is not necessary. The presence of P or S but not type 1 pili protects the target cells against growth inhibition for this CDI. BamA on the outer membrane of target cells acts as a receptor for CdiA, while target cell multidrug efflux pump AcrB facilitates its transport into the cytoplasm. Outer membrane receptor function is dependent on extracellular loops of BamA. Cells undergoing CDI show a 2- to 5-fold reversible decrease in aerobic respiration, proton motive force and steady-state ATP levels, suggesting this CT module is an ionophore that disrupts the target cell's inner cell membrane. Growth recovery requires an energy source. Cells expressing this protein in the absence of CdiI initially form filaments, some of which contain multiple nucleoids, while others are devoid of nucleoids. CDI cells induce the phage shock response, but pspA is not required for recovery from CDI. CDI is neutralized by its cognate immunity protein CdiI, but not by non-cognate CdiI from other bacteria with different CDI systems. Plays a role in biofilm formation, a region N-terminal to residue 644 is implicated in this receptor-independent cell adhesion. Its function is as follows. The CdiA protein is thought to be exported from the cell through the central lumen of CdiB, the other half of its two-partner system (TPS). The TPS domain probably remains associated with CdiB while the FHA-1 domain forms an extended filament (33 nm long) with the receptor-binding domain (RBD) at its extremity; in the secretion arrested state the C-terminus of the RBD and YP domains form a hairpin-like structure as the FHA-2, PT and CT domains are periplasmic. The YP domain is probably responsible for this arrest at the point where it re-enters the host cell periplasm. Upon binding to a target cell outer membrane receptor (BamA for this CDI) a signal is transmitted to activate secretion. The filament becomes about 5 nm longer, the rest of CdiA is secreted and the FHA-2 domain becomes stably associated with the target cell's outer membrane where it facilitates entry of the toxic CT domain into the target cell periplasm. From there the toxic CT domain is cleaved and gains access to the target cell cytoplasm via an inner membrane protein (multidrug efflux pump AcrB for this CDI). In Escherichia coli, this protein is Toxin CdiA.